A 251-amino-acid chain; its full sequence is Ribonuclease PH (251 aa).

Residues R90 and 128–130 contribute to the phosphate site; that span reads GTR.

This sequence belongs to the RNase PH family. As to quaternary structure, homohexameric ring arranged as a trimer of dimers.

It carries out the reaction tRNA(n+1) + phosphate = tRNA(n) + a ribonucleoside 5'-diphosphate. Its function is as follows. Phosphorolytic 3'-5' exoribonuclease that plays an important role in tRNA 3'-end maturation. Removes nucleotide residues following the 3'-CCA terminus of tRNAs; can also add nucleotides to the ends of RNA molecules by using nucleoside diphosphates as substrates, but this may not be physiologically important. Probably plays a role in initiation of 16S rRNA degradation (leading to ribosome degradation) during starvation. The protein is Ribonuclease PH of Leifsonia xyli subsp. xyli (strain CTCB07).